A 233-amino-acid chain; its full sequence is Phosphoribosylaminoimidazole-succinocarboxamide synthase (233 aa).

This sequence belongs to the SAICAR synthetase family.

It carries out the reaction 5-amino-1-(5-phospho-D-ribosyl)imidazole-4-carboxylate + L-aspartate + ATP = (2S)-2-[5-amino-1-(5-phospho-beta-D-ribosyl)imidazole-4-carboxamido]succinate + ADP + phosphate + 2 H(+). It functions in the pathway purine metabolism; IMP biosynthesis via de novo pathway; 5-amino-1-(5-phospho-D-ribosyl)imidazole-4-carboxamide from 5-amino-1-(5-phospho-D-ribosyl)imidazole-4-carboxylate: step 1/2. This Thermococcus sibiricus (strain DSM 12597 / MM 739) protein is Phosphoribosylaminoimidazole-succinocarboxamide synthase.